The primary structure comprises 188 residues: Protein crossbronx-like (188 aa).

Positions 15 to 174 (KQGYHILAEY…ANQVVKLHCG (160 aa)) constitute a UBC core domain.

The protein belongs to the ubiquitin-conjugating enzyme family. FTS subfamily.

In Drosophila simulans (Fruit fly), this protein is Protein crossbronx-like.